The chain runs to 210 residues: Ribosomal RNA large subunit methyltransferase E (210 aa).

Residues G60, W62, D80, D96, and D122 each contribute to the S-adenosyl-L-methionine site. The active-site Proton acceptor is the K162.

It belongs to the class I-like SAM-binding methyltransferase superfamily. RNA methyltransferase RlmE family.

It localises to the cytoplasm. The enzyme catalyses uridine(2552) in 23S rRNA + S-adenosyl-L-methionine = 2'-O-methyluridine(2552) in 23S rRNA + S-adenosyl-L-homocysteine + H(+). In terms of biological role, specifically methylates the uridine in position 2552 of 23S rRNA at the 2'-O position of the ribose in the fully assembled 50S ribosomal subunit. The chain is Ribosomal RNA large subunit methyltransferase E from Dichelobacter nodosus (strain VCS1703A).